Reading from the N-terminus, the 461-residue chain is Argininosuccinate lyase (461 aa).

Belongs to the lyase 1 family. Argininosuccinate lyase subfamily.

It is found in the cytoplasm. The catalysed reaction is 2-(N(omega)-L-arginino)succinate = fumarate + L-arginine. It participates in amino-acid biosynthesis; L-arginine biosynthesis; L-arginine from L-ornithine and carbamoyl phosphate: step 3/3. Its activity is regulated as follows. Strongly inhibited by L-arginine. Inhibitory effects are lowered at pH 7.0 compared to those at pH 8.0. At 45 degrees Celsius and pH 8.0, activity decreases to 94%, 74% and 37% in the presence of 0.6 mM, 2.8 mM and 10 mM arginine, respectively. Activity also decreases to 86% in the presence of 10 mM sodium succinate or sodium citrate. Activity does not decrease in the presence of 1 mM or 10 mM L-lysine, which has a similar structure to arginine. Functionally, catalyzes the last step of arginine biosynthesis, the conversion of argininosuccinate into L-arginine and fumarate. The protein is Argininosuccinate lyase of Synechocystis sp. (strain ATCC 27184 / PCC 6803 / Kazusa).